A 151-amino-acid polypeptide reads, in one-letter code: Cytochrome c-type biogenesis protein CcmE 1 (151 aa).

Residues 1–8 (MNPLRKKR) are Cytoplasmic-facing. A helical; Signal-anchor for type II membrane protein transmembrane segment spans residues 9–29 (LIIILAILVGVGAAVGLALSA). Over 30–151 (LQQNINLFYT…QSAPTPAKEG (122 aa)) the chain is Periplasmic. The heme site is built by His-124 and Tyr-128. A disordered region spans residues 131–151 (PEVTKALKDSGQSAPTPAKEG).

Belongs to the CcmE/CycJ family.

The protein resides in the cell inner membrane. Heme chaperone required for the biogenesis of c-type cytochromes. Transiently binds heme delivered by CcmC and transfers the heme to apo-cytochromes in a process facilitated by CcmF and CcmH. This Pseudomonas fluorescens (strain Pf0-1) protein is Cytochrome c-type biogenesis protein CcmE 1.